Consider the following 401-residue polypeptide: Glyceraldehyde-3-phosphate dehydrogenase A, chloroplastic (401 aa).

The N-terminal 65 residues, 1-65, are a transit peptide targeting the chloroplast; the sequence is MASNMLSIAN…RSSQNGVVEA (65 aa). NADP(+)-binding positions include 76–77, Asp100, and Arg145; that span reads RI. D-glyceraldehyde 3-phosphate contacts are provided by residues 217–219, Thr248, Arg263, 276–277, and Arg299; these read SCT and TG. Cys218 serves as the catalytic Nucleophile. Residue Asn381 participates in NADP(+) binding.

It belongs to the glyceraldehyde-3-phosphate dehydrogenase family. Tetramer of either four A chains (GAPDH 2) or two A and two B chains (GAPDH 1).

It localises to the plastid. The protein resides in the chloroplast. The catalysed reaction is D-glyceraldehyde 3-phosphate + phosphate + NADP(+) = (2R)-3-phospho-glyceroyl phosphate + NADPH + H(+). It participates in carbohydrate biosynthesis; Calvin cycle. The polypeptide is Glyceraldehyde-3-phosphate dehydrogenase A, chloroplastic (GAPA) (Spinacia oleracea (Spinach)).